A 275-amino-acid chain; its full sequence is Large ribosomal subunit protein uL2c (275 aa).

The segment at glycine 222–lysine 258 is disordered.

The protein belongs to the universal ribosomal protein uL2 family. In terms of assembly, part of the 50S ribosomal subunit.

The protein resides in the plastid. Its subcellular location is the chloroplast. The sequence is that of Large ribosomal subunit protein uL2c (rpl2) from Chlorella vulgaris (Green alga).